A 377-amino-acid polypeptide reads, in one-letter code: 4-hydroxy-tetrahydrodipicolinate synthase 2, chloroplastic (377 aa).

A chloroplast-targeting transit peptide spans 1–51; it reads MMAAQPTANPGVRLGWKAPGALASPPRLALSRSAAAPLASHRVGRGKFSAA. Residue threonine 120 participates in pyruvate binding. Residue tyrosine 206 is the Proton donor/acceptor of the active site. Residue lysine 234 is the Schiff-base intermediate with substrate of the active site. Isoleucine 273 is a binding site for pyruvate.

The protein belongs to the DapA family. As to quaternary structure, tetramer of modified subunits derived from two genes in different combinations.

Its subcellular location is the plastid. It localises to the chloroplast. The catalysed reaction is L-aspartate 4-semialdehyde + pyruvate = (2S,4S)-4-hydroxy-2,3,4,5-tetrahydrodipicolinate + H2O + H(+). Its pathway is amino-acid biosynthesis; L-lysine biosynthesis via DAP pathway; (S)-tetrahydrodipicolinate from L-aspartate: step 3/4. Sensitive to lysine inhibition. This inhibition increase in an allosteric manner with increasing concentration of the inhibitor. In terms of biological role, catalyzes the condensation of (S)-aspartate-beta-semialdehyde [(S)-ASA] and pyruvate to 4-hydroxy-tetrahydrodipicolinate (HTPA). In Triticum aestivum (Wheat), this protein is 4-hydroxy-tetrahydrodipicolinate synthase 2, chloroplastic.